Here is a 362-residue protein sequence, read N- to C-terminus: Probable protein phosphatase 2C 24 (362 aa).

One can recognise a PPM-type phosphatase domain in the interval 77-360 (RYGVSSVCGR…DNVSVVVIDL (284 aa)). Mn(2+) is bound by residues D117, G118, D295, and D351.

The protein belongs to the PP2C family. Mg(2+) serves as cofactor. The cofactor is Mn(2+).

The catalysed reaction is O-phospho-L-seryl-[protein] + H2O = L-seryl-[protein] + phosphate. It carries out the reaction O-phospho-L-threonyl-[protein] + H2O = L-threonyl-[protein] + phosphate. The protein is Probable protein phosphatase 2C 24 of Arabidopsis thaliana (Mouse-ear cress).